Reading from the N-terminus, the 553-residue chain is Protein PNS1 (553 aa).

Positions 1 to 53 (MFGEGNKPTEPVPAYDAGQDPFQGPNASKNQYQGSAADYNGAPPPPASQPGNQ) are disordered. The Cytoplasmic segment spans residues 1–94 (MFGEGNKPTE…EDSKPKWNDW (94 aa)). Residues 25-34 (PNASKNQYQG) show a composition bias toward polar residues. The chain crosses the membrane as a helical span at residues 95 to 115 (PFTIFFAGCVIAFIVVAAITL). The Extracellular portion of the chain corresponds to 116–142 (RAWSQNSSSQGSGVYDGANTGTLTTNS). N121 carries an N-linked (GlcNAc...) asparagine glycan. Residues 143–163 (AIMLAISCIIAFVFSIIGIVL) form a helical membrane-spanning segment. Residues 164–169 (ARMFPK) lie on the Cytoplasmic side of the membrane. The chain crosses the membrane as a helical span at residues 170–190 (FFIIAGILFNIIAGLATAIMY). At 191 to 192 (LS) the chain is on the extracellular side. Residues 193-213 (LKYYSAGIVFLVFTAICALFY) traverse the membrane as a helical segment. The Cytoplasmic portion of the chain corresponds to 214-241 (WRMRHRIPFTVAVLKTVMDVMKSYPQTW). A helical membrane pass occupies residues 242 to 262 (FVTLIGSIIATAFSILFSAVI). The Extracellular portion of the chain corresponds to 263-287 (VATYMKYDDKANNPGCSTNGGSCSN). A helical transmembrane segment spans residues 288-308 (AKLIGLLVLVFFCGYYIAEVI). The Cytoplasmic portion of the chain corresponds to 309–349 (RNVIHCTVSGIFGAWYYFSKSDQGMPKWPGFGALKRSLTYS). Residues 350 to 370 (FGSICFGSLIVTIIETLKAVL) form a helical membrane-spanning segment. Residues 371-385 (RLAVDGVMGGGGADN) lie on the Extracellular side of the membrane. A helical transmembrane segment spans residues 386–406 (GWMQCLALIANWIFSFLEWLA). Over 407-450 (RYFNHYAYVFIALYGKPYLRAAKETWYMLREKGIDALINDNLVN) the chain is Cytoplasmic. The chain crosses the membrane as a helical span at residues 451–471 (VALSFFTLFTCYITTLFAYLY). The Extracellular portion of the chain corresponds to 472 to 484 (LRYTDPNYNDNNN). Residues 485–505 (FTPALMAFAFVIAMEICNVIT) traverse the membrane as a helical segment. At 506 to 553 (ETIRSGTATFFVALGNDPEVFHLSYPERFDEIFRAYPEVLKKLSHQNV) the chain is on the cytoplasmic side.

The protein belongs to the CTL (choline transporter-like) family.

It is found in the cell membrane. In terms of biological role, probably involved in transport through the plasma membrane. This Kluyveromyces lactis (strain ATCC 8585 / CBS 2359 / DSM 70799 / NBRC 1267 / NRRL Y-1140 / WM37) (Yeast) protein is Protein PNS1 (PNS1).